Reading from the N-terminus, the 196-residue chain is MEKFTIYTGTTVPLMNDNIDTDQILPKQFLKLIDKKGFGKYLMYAWRYLDNQYTEDPDFVFNRPEYRKATILITGDNFGAGSSREHAAWALADYGFKVVIAGSFGDIHYNNELNNGMLPIVQPLEVRQALANLKPTDQVTVDLEQQKIFSPVGEFSFDIDGEWKHKLLNGLDDIGITLQYEDLITEYEKNRPSYWQ.

The protein belongs to the LeuD family. LeuD type 1 subfamily. In terms of assembly, heterodimer of LeuC and LeuD.

The enzyme catalyses (2R,3S)-3-isopropylmalate = (2S)-2-isopropylmalate. The protein operates within amino-acid biosynthesis; L-leucine biosynthesis; L-leucine from 3-methyl-2-oxobutanoate: step 2/4. Catalyzes the isomerization between 2-isopropylmalate and 3-isopropylmalate, via the formation of 2-isopropylmaleate. The polypeptide is 3-isopropylmalate dehydratase small subunit (Streptococcus sanguinis (strain SK36)).